The sequence spans 196 residues: Elongation factor Ts (196 aa).

The interval 80–83 is involved in Mg(2+) ion dislocation from EF-Tu; sequence TDFV.

The protein belongs to the EF-Ts family.

It localises to the cytoplasm. Associates with the EF-Tu.GDP complex and induces the exchange of GDP to GTP. It remains bound to the aminoacyl-tRNA.EF-Tu.GTP complex up to the GTP hydrolysis stage on the ribosome. The protein is Elongation factor Ts of Desulfotalea psychrophila (strain LSv54 / DSM 12343).